The sequence spans 248 residues: tRNA (guanine-N(1)-)-methyltransferase (248 aa).

S-adenosyl-L-methionine contacts are provided by residues glycine 113 and 133–138 (LGDFVL).

Belongs to the RNA methyltransferase TrmD family. In terms of assembly, homodimer.

It localises to the cytoplasm. It catalyses the reaction guanosine(37) in tRNA + S-adenosyl-L-methionine = N(1)-methylguanosine(37) in tRNA + S-adenosyl-L-homocysteine + H(+). Specifically methylates guanosine-37 in various tRNAs. The protein is tRNA (guanine-N(1)-)-methyltransferase of Albidiferax ferrireducens (strain ATCC BAA-621 / DSM 15236 / T118) (Rhodoferax ferrireducens).